We begin with the raw amino-acid sequence, 143 residues long: Anti-sigma F factor (143 aa).

This sequence belongs to the anti-sigma-factor family.

It carries out the reaction L-seryl-[protein] + ATP = O-phospho-L-seryl-[protein] + ADP + H(+). The catalysed reaction is L-threonyl-[protein] + ATP = O-phospho-L-threonyl-[protein] + ADP + H(+). In terms of biological role, binds to sigma F and blocks its ability to form an RNA polymerase holoenzyme (E-sigma F). Phosphorylates SpoIIAA on a serine residue. This phosphorylation may enable SpoIIAA to act as an anti-anti-sigma factor that counteracts SpoIIAB and thus releases sigma F from inhibition. The polypeptide is Anti-sigma F factor (Clostridium novyi (strain NT)).